Consider the following 607-residue polypeptide: Terpenoid synthase 29 (607 aa).

Residues Asp358, Asp362, Asn502, Thr506, and Glu510 each coordinate Mg(2+). Residues 358–362 carry the DDXXD motif motif; sequence DDTYD.

Belongs to the terpene synthase family. Tpsa subfamily. Mg(2+) is required as a cofactor. Requires Mn(2+) as cofactor. In terms of tissue distribution, predominantly expressed in flowers but also in siliques, roots, leaves and stems.

It is found in the cytoplasm. It participates in secondary metabolite biosynthesis; terpenoid biosynthesis. This chain is Terpenoid synthase 29 (TPS29), found in Arabidopsis thaliana (Mouse-ear cress).